An 87-amino-acid polypeptide reads, in one-letter code: UPF0250 protein PC1_1177 (87 aa).

It belongs to the UPF0250 family.

In Pectobacterium carotovorum subsp. carotovorum (strain PC1), this protein is UPF0250 protein PC1_1177.